A 215-amino-acid polypeptide reads, in one-letter code: 3-isopropylmalate dehydratase small subunit (215 aa).

It belongs to the LeuD family. LeuD type 1 subfamily. In terms of assembly, heterodimer of LeuC and LeuD.

The catalysed reaction is (2R,3S)-3-isopropylmalate = (2S)-2-isopropylmalate. It functions in the pathway amino-acid biosynthesis; L-leucine biosynthesis; L-leucine from 3-methyl-2-oxobutanoate: step 2/4. Catalyzes the isomerization between 2-isopropylmalate and 3-isopropylmalate, via the formation of 2-isopropylmaleate. The sequence is that of 3-isopropylmalate dehydratase small subunit from Xanthomonas axonopodis pv. citri (strain 306).